The primary structure comprises 716 residues: Pyruvate/proton symporter BtsT (716 aa).

At 1–5 (MDTKK) the chain is on the cytoplasmic side. A helical transmembrane segment spans residues 6 to 26 (IFKHIPWVILGIIGAFCLAVV). The Periplasmic segment spans residues 27–30 (ALRR). A helical transmembrane segment spans residues 31 to 51 (GEHISALWIVVASVSVYLVAY). Residues 52-88 (RYYSLYIAQKVMKLDPTRATPAVINNDGLNYVPTNRY) are Cytoplasmic-facing. Residues 89–109 (VLFGHHFAAIAGAGPLVGPVL) traverse the membrane as a helical segment. The Periplasmic portion of the chain corresponds to 110-119 (AAQMGYLPGT). Residues 120–140 (LWLLAGVVLAGAVQDFMVLFI) form a helical membrane-spanning segment. At 141-163 (SSRRNGASLGEMIKEEMGPVPGT) the chain is on the cytoplasmic side. The chain crosses the membrane as a helical span at residues 164-184 (IALFGCFLIMIIILAVLALIV). Residues 185 to 191 (VKALAES) lie on the Periplasmic side of the membrane. Residues 192 to 212 (PWGVFTVCSTVPIALFMGIYM) traverse the membrane as a helical segment. Topologically, residues 213-222 (RFIRPGRVGE) are cytoplasmic. Residues 223–243 (VSVIGIVLLVASIYFGGVIAH) form a helical membrane-spanning segment. The Periplasmic segment spans residues 244 to 257 (DPYWGPALTFKDTT). Residues 258 to 278 (ITFALIGYAFVSALLPVWLIL) form a helical membrane-spanning segment. Residues 279–282 (APRD) lie on the Cytoplasmic side of the membrane. The helical transmembrane segment at 283 to 303 (YLATFLKIGVIVGLALGIVVL) threads the bilayer. Residues 304-326 (NPELKMPAMTQYIDGTGPLWKGA) lie on the Periplasmic side of the membrane. Residues 327 to 347 (LFPFLFITIACGAVSGFHALI) form a helical membrane-spanning segment. The Cytoplasmic segment spans residues 348–374 (SSGTTPKLLANETDARFIGYGAMLMES). A helical transmembrane segment spans residues 375-395 (FVAIMALVAASIIEPGLYFAM). The Periplasmic segment spans residues 396-484 (NTPPAGLGIT…HVFHKVLPMA (89 aa)). The helical transmembrane segment at 485 to 505 (DMGFWYHFGILFEALFILTAL) threads the bilayer. The Cytoplasmic segment spans residues 506–531 (DAGTRSGRFMLQDLLGNFIPFLKKTD). The chain crosses the membrane as a helical span at residues 532 to 552 (SLVAGIIGTAGCVGLWGYLLY). The Periplasmic portion of the chain corresponds to 553–568 (QGVVDPLGGVKSLWPL). Residues 569–589 (FGISNQMLAAVALVLGTVVLI) form a helical membrane-spanning segment. The Cytoplasmic segment spans residues 590–596 (KMKRTQY). The chain crosses the membrane as a helical span at residues 597–617 (IWVTVVPAVWLLICTTWALGL). At 618–668 (KLFSTNPQMEGFFYMASQYKEKIANGTDLTAQQIANMNHIVVNNYTNAGLS) the chain is on the periplasmic side. The helical transmembrane segment at 669-689 (ILFLIVVYSIIFYGFKTWLAV) threads the bilayer. Residues 690–716 (RNSDKRTDKETPYVPIPEGGVKISSHH) lie on the Cytoplasmic side of the membrane. The segment at 696–716 (TDKETPYVPIPEGGVKISSHH) is disordered.

This sequence belongs to the peptide transporter carbon starvation (CstA) (TC 2.A.114) family. Interacts with BtsS and YpdA.

It is found in the cell inner membrane. It carries out the reaction pyruvate(out) + H(+)(out) = pyruvate(in) + H(+)(in). With respect to regulation, transport is inhibited by the protonophores 2,4-dinitrophenol (DNP) and carbonyl cyanide m-chlorophenyl hydrazone (CCCP), but not by ionophores such as valinomycin, nonactin and nigericin. Functionally, transports pyruvate with a high affinity and specificity. The process is driven by the proton motive force. Under nutrient limiting conditions, mediates the uptake of pyruvate, thus enabling it to be used as a carbon source for the growth and survival. Part of a nutrient-sensing regulatory network composed of the two-component regulatory systems BtsS/BtsR and YpdA/YpdB, and their respective target proteins, BtsT and YhjX. In Escherichia coli (strain K12), this protein is Pyruvate/proton symporter BtsT.